A 266-amino-acid polypeptide reads, in one-letter code: Short-chain dehydrogenase/reductase AacuF (266 aa).

NADP(+)-binding residues include Leu-13, Asp-57, and Asn-85. Active-site proton donor residues include Ser-145 and Tyr-164. Tyr-164, Lys-168, and Val-198 together coordinate NADP(+). The active-site Lowers pKa of active site Tyr is the Lys-168.

The protein belongs to the short-chain dehydrogenases/reductases (SDR) family.

Its pathway is secondary metabolite biosynthesis. Its function is as follows. Short-chain dehydrogenase/reductase; part of the gene cluster that mediates the biosynthesis of the tetrahydroxanthone dimer secalonic acid D. The pathway begins with the synthesis of atrochrysone thioester by the polyketide synthase AacuL. The atrochrysone carboxyl ACP thioesterase AacuM then breaks the thioester bond and releases the atrochrysone carboxylic acid from AacuL. Atrochrysone carboxylic acid is decarboxylated by the decarboxylase AacuI, and oxidized by the anthrone oxygenase AacuG to yield emodin. Emodin is then reduced to emodin hydroquinone by a yet unidentified oxidoreductase. A-ring reduction by the short chain dehydrogenase AacuN, dehydration by the scytalone dehydratase-like protein AacuK and probable spontaneous re-oxidation, results in overall deoxygenation to chrysophanol. Baeyer-Villiger oxidation by the Baeyer-Villiger monooxygenase (BVMO) AacuH then yields monodictyphenone. Monodictyphenone is transformed into compounds with the tetrahydroxanthone skeleton via methylesterification by the methyltransferase AacuQ, followed by the action of the flavin-dependent monooxygenase AacuC, the isomerase AacuP, and the short chain dehydrogenase/reductase AacuF or AacuD. AacuF and AacuD should accept the same compound as a substrate but perform the ketoreduction with a different stereoselectivity, thus yielding blennolides B and A, respectively. In the final step of the biosynthesis, the cytochrome P450 monooxygenase AacuE accepts blennolide B and/or blennolide A to conduct the dimerization reaction to furnish the tetrahydroxanthone dimers, secalonic acids D, B, and F. The protein is Short-chain dehydrogenase/reductase AacuF of Aspergillus aculeatus (strain ATCC 16872 / CBS 172.66 / WB 5094).